Consider the following 277-residue polypeptide: UPF0276 protein PP_0992 (277 aa).

This sequence belongs to the UPF0276 family.

This chain is UPF0276 protein PP_0992, found in Pseudomonas putida (strain ATCC 47054 / DSM 6125 / CFBP 8728 / NCIMB 11950 / KT2440).